A 552-amino-acid polypeptide reads, in one-letter code: 2-methyl-1,2-propanediol dehydrogenase (552 aa).

Belongs to the GMC oxidoreductase family. Requires FAD as cofactor.

It localises to the cytoplasm. The catalysed reaction is 2-methylpropane-1,2-diol + NAD(+) = 2-hydroxy-2-methylpropanal + NADH + H(+). In terms of biological role, involved in the degradation of methyl tert-butyl ether (MTBE). Catalyzes the conversion of 2-methyl 1,2-propanediol (2-M1,2-PD) to hydroxyisobutyraldehyde. The sequence is that of 2-methyl-1,2-propanediol dehydrogenase from Mycolicibacterium austroafricanum (Mycobacterium austroafricanum).